We begin with the raw amino-acid sequence, 387 residues long: Succinate--CoA ligase [ADP-forming] subunit beta (387 aa).

One can recognise an ATP-grasp domain in the interval 9 to 236; sequence KELFAKHNVP…RDATDPLELK (228 aa). ATP contacts are provided by residues K45, 52–54, S94, and E99; that span reads GRG. N191 and D205 together coordinate Mg(2+). Substrate-binding positions include N256 and 318–320; that span reads GIT.

This sequence belongs to the succinate/malate CoA ligase beta subunit family. As to quaternary structure, heterotetramer of two alpha and two beta subunits. Requires Mg(2+) as cofactor.

It carries out the reaction succinate + ATP + CoA = succinyl-CoA + ADP + phosphate. It catalyses the reaction GTP + succinate + CoA = succinyl-CoA + GDP + phosphate. It participates in carbohydrate metabolism; tricarboxylic acid cycle; succinate from succinyl-CoA (ligase route): step 1/1. In terms of biological role, succinyl-CoA synthetase functions in the citric acid cycle (TCA), coupling the hydrolysis of succinyl-CoA to the synthesis of either ATP or GTP and thus represents the only step of substrate-level phosphorylation in the TCA. The beta subunit provides nucleotide specificity of the enzyme and binds the substrate succinate, while the binding sites for coenzyme A and phosphate are found in the alpha subunit. The protein is Succinate--CoA ligase [ADP-forming] subunit beta of Mycolicibacterium smegmatis (strain ATCC 700084 / mc(2)155) (Mycobacterium smegmatis).